Reading from the N-terminus, the 180-residue chain is Large ribosomal subunit protein uL5 (180 aa).

Belongs to the universal ribosomal protein uL5 family. Part of the 50S ribosomal subunit; part of the 5S rRNA/L5/L18/L25 subcomplex. Contacts the 5S rRNA and the P site tRNA. Forms a bridge to the 30S subunit in the 70S ribosome.

This is one of the proteins that bind and probably mediate the attachment of the 5S RNA into the large ribosomal subunit, where it forms part of the central protuberance. In the 70S ribosome it contacts protein S13 of the 30S subunit (bridge B1b), connecting the 2 subunits; this bridge is implicated in subunit movement. Contacts the P site tRNA; the 5S rRNA and some of its associated proteins might help stabilize positioning of ribosome-bound tRNAs. This chain is Large ribosomal subunit protein uL5, found in Rubrobacter xylanophilus (strain DSM 9941 / JCM 11954 / NBRC 16129 / PRD-1).